Consider the following 64-residue polypeptide: Large ribosomal subunit protein bL35 (64 aa).

It belongs to the bacterial ribosomal protein bL35 family.

This is Large ribosomal subunit protein bL35 from Coxiella burnetii (strain RSA 493 / Nine Mile phase I).